The chain runs to 726 residues: MKKLVIGILGIVIALFVGLLVFLIPIYKNLPDPKLLESWTPPQASEVYDAKGRLYGTIGIQKRFYVSIDKIPEHVINAFVATEDRNFWHHFGIDPVAIVRAAIVNYRAGRIVQGGSTITQQLAKNLFLTRERTLERKIKEALLAIKIERTFDKKKIMELYLNQIYLGSGAYGVEAAAQVYFGKHVWELSLDEAALLAALPKAPAKYNPFYHPERALQRRNLVLKRMLEEGYITPEQYEEAVNKPLTVKKENKYKFSDYFLDMVKSYVFNKYGEIAYKGRLKIYTTIDLDYQKIAQKSLEEGLKRVAKIIGLPFLPKSEEDMELAYEKEAQLKRLKRGKIYVAKILKYDGNFMKVEIHGKKLKGEIKGLNTEGHKYVFVKYLGGNRAEIIPDLEGSLVSIDVKTGEIKAIVGGRSYAYSQFNRAVKALRQPGSAIKPVIYLSALLKGMTQISTIDASSKPYYDPSKGEDWIPKNYDEKEYGNVTLRYALAHSINTAAVNLLDKVGFELVLEVGKKVGLDNLKPYYSLALGTVEVTPLQLTAAYQVFANLGTECKPFFIKKIVDENGEVLEENVPECEEVLPKPETRVPVDMLRAVVLEGTARRASVLDRIVAGKTGTTDDFQDAWFVGFSPYIVTGVWVGYDVKKSLGKHMSGSRVALPIWIDYMKVVTRMYPNEDFELPPENIVVNINPKDLVLADETCEGVPMVFVKGTEPHITCSDLNAILGLR.

At 1–3 (MKK) the chain is on the cytoplasmic side. A helical; Signal-anchor for type II membrane protein membrane pass occupies residues 4-24 (LVIGILGIVIALFVGLLVFLI). At 25–726 (PIYKNLPDPK…SDLNAILGLR (702 aa)) the chain is on the periplasmic side. A transglycosylase region spans residues 45-213 (SEVYDAKGRL…AKYNPFYHPE (169 aa)). Catalysis depends on Glu-83, which acts as the Proton donor; for transglycosylase activity. Residues 379 to 662 (KYLGGNRAEI…SRVALPIWID (284 aa)) form a transpeptidase region. Ser-432 (acyl-ester intermediate; for transpeptidase activity) is an active-site residue.

In the N-terminal section; belongs to the glycosyltransferase 51 family. It in the C-terminal section; belongs to the transpeptidase family.

The protein resides in the cell inner membrane. The catalysed reaction is [GlcNAc-(1-&gt;4)-Mur2Ac(oyl-L-Ala-gamma-D-Glu-L-Lys-D-Ala-D-Ala)](n)-di-trans,octa-cis-undecaprenyl diphosphate + beta-D-GlcNAc-(1-&gt;4)-Mur2Ac(oyl-L-Ala-gamma-D-Glu-L-Lys-D-Ala-D-Ala)-di-trans,octa-cis-undecaprenyl diphosphate = [GlcNAc-(1-&gt;4)-Mur2Ac(oyl-L-Ala-gamma-D-Glu-L-Lys-D-Ala-D-Ala)](n+1)-di-trans,octa-cis-undecaprenyl diphosphate + di-trans,octa-cis-undecaprenyl diphosphate + H(+). It carries out the reaction Preferential cleavage: (Ac)2-L-Lys-D-Ala-|-D-Ala. Also transpeptidation of peptidyl-alanyl moieties that are N-acyl substituents of D-alanine.. Its pathway is cell wall biogenesis; peptidoglycan biosynthesis. This is Penicillin-binding protein 1A (mrcA) from Aquifex aeolicus (strain VF5).